Consider the following 274-residue polypeptide: Thiamine kinase (274 aa).

The protein belongs to the thiamine kinase family.

The enzyme catalyses thiamine + ATP = thiamine phosphate + ADP + H(+). It functions in the pathway cofactor biosynthesis; thiamine diphosphate biosynthesis; thiamine phosphate from thiamine: step 1/1. In terms of biological role, catalyzes the ATP-dependent phosphorylation of thiamine to thiamine phosphate. Is involved in thiamine salvage. The chain is Thiamine kinase from Salmonella typhi.